The chain runs to 226 residues: Ribosome maturation factor RimP (226 aa).

The segment at 190 to 226 is disordered; sequence VFPDTTRPQPGGKTGQRKKAQPKKPARGGAPHDDTTD. Basic residues predominate over residues 204 to 215; sequence GQRKKAQPKKPA.

This sequence belongs to the RimP family.

Its subcellular location is the cytoplasm. Required for maturation of 30S ribosomal subunits. The sequence is that of Ribosome maturation factor RimP from Nitratidesulfovibrio vulgaris (strain DSM 19637 / Miyazaki F) (Desulfovibrio vulgaris).